A 265-amino-acid chain; its full sequence is Metallo-beta-lactamase VIM-7 (265 aa).

The N-terminal stretch at 1–17 (MFQIRSFLVGISAFVMA) is a signal peptide. 6 residues coordinate Zn(2+): histidine 113, histidine 115, aspartate 117, histidine 178, cysteine 197, and histidine 239.

It belongs to the metallo-beta-lactamase superfamily. Class-B beta-lactamase family. In terms of assembly, monomer. Zn(2+) serves as cofactor.

The protein localises to the periplasm. It carries out the reaction a beta-lactam + H2O = a substituted beta-amino acid. Class B beta-lactamase which confers resistance to the beta-lactam antibiotics, including penicillins, cephalosporins and carbapenems. Acts via hydrolysis of the beta-lactam ring. Has penicillin-, cephalosporin- and carbapenem-hydrolyzing activities. The chain is Metallo-beta-lactamase VIM-7 from Pseudomonas aeruginosa.